The primary structure comprises 410 residues: Multifunctional CCA protein (410 aa).

Residues Gly-8 and Arg-11 each contribute to the ATP site. 2 residues coordinate CTP: Gly-8 and Arg-11. Residues Asp-21 and Asp-23 each coordinate Mg(2+). ATP-binding residues include Arg-91, Arg-138, and Arg-141. 3 residues coordinate CTP: Arg-91, Arg-138, and Arg-141. The region spanning 229–347 (TGIHQEMVSD…AQLALVCEAD (119 aa)) is the HD domain.

This sequence belongs to the tRNA nucleotidyltransferase/poly(A) polymerase family. Bacterial CCA-adding enzyme type 1 subfamily. Monomer. Can also form homodimers and oligomers. The cofactor is Mg(2+). Ni(2+) serves as cofactor.

It carries out the reaction a tRNA precursor + 2 CTP + ATP = a tRNA with a 3' CCA end + 3 diphosphate. The catalysed reaction is a tRNA with a 3' CCA end + 2 CTP + ATP = a tRNA with a 3' CCACCA end + 3 diphosphate. Catalyzes the addition and repair of the essential 3'-terminal CCA sequence in tRNAs without using a nucleic acid template. Adds these three nucleotides in the order of C, C, and A to the tRNA nucleotide-73, using CTP and ATP as substrates and producing inorganic pyrophosphate. tRNA 3'-terminal CCA addition is required both for tRNA processing and repair. Also involved in tRNA surveillance by mediating tandem CCA addition to generate a CCACCA at the 3' terminus of unstable tRNAs. While stable tRNAs receive only 3'-terminal CCA, unstable tRNAs are marked with CCACCA and rapidly degraded. This chain is Multifunctional CCA protein, found in Xanthomonas oryzae pv. oryzae (strain MAFF 311018).